Consider the following 144-residue polypeptide: Large ribosomal subunit protein uL16 (144 aa).

It belongs to the universal ribosomal protein uL16 family. As to quaternary structure, part of the 50S ribosomal subunit.

Its function is as follows. Binds 23S rRNA and is also seen to make contacts with the A and possibly P site tRNAs. This Bacillus cytotoxicus (strain DSM 22905 / CIP 110041 / 391-98 / NVH 391-98) protein is Large ribosomal subunit protein uL16.